The primary structure comprises 367 residues: MAIKTENFILNIGPQHPSTHGVFRLRIVLDGEVITDLEPVFGYLHRGIEKLAEGRTYLQDIPFTDRLDYLGSMTNNHAYVMAVEKLAGITVPERAEYIRVILDELQRIASHLAGLGFFLNDLGALQTPLLYMFREREKIVELFDMCSGQRLNYNYYRFGGFVQDLPEEFLPALKILLDTLPGFIDEYEQLISTNEIVLIRTKGVGVLKRDLAINSSAAGPVLRASGINWDIRRNDPYSIYNRFEFDIPIAKNGDTYDRYMIRILEMRQSVWILRQAVKDLPEGEIMGKAPKLLKPPAGEVYSRIEGPKGELGFYLVSDGTDKPYRWRVRPPCLLNLSALKDMVVGWKVADLMAIFGSIDIVMGEVDR.

This sequence belongs to the complex I 49 kDa subunit family. As to quaternary structure, NDH-1 is composed of 14 different subunits. Subunits NuoB, C, D, E, F, and G constitute the peripheral sector of the complex.

It localises to the cell membrane. The catalysed reaction is a quinone + NADH + 5 H(+)(in) = a quinol + NAD(+) + 4 H(+)(out). Its function is as follows. NDH-1 shuttles electrons from NADH, via FMN and iron-sulfur (Fe-S) centers, to quinones in the respiratory chain. The immediate electron acceptor for the enzyme in this species is believed to be ubiquinone. Couples the redox reaction to proton translocation (for every two electrons transferred, four hydrogen ions are translocated across the cytoplasmic membrane), and thus conserves the redox energy in a proton gradient. In Dehalococcoides mccartyi (strain CBDB1), this protein is NADH-quinone oxidoreductase subunit D.